A 55-amino-acid chain; its full sequence is Large ribosomal subunit protein bL33 (55 aa).

It belongs to the bacterial ribosomal protein bL33 family.

This is Large ribosomal subunit protein bL33 from Blochmanniella pennsylvanica (strain BPEN).